A 1186-amino-acid chain; its full sequence is Syntaxin-binding protein 5-like (1186 aa).

Met1 is subject to N-acetylmethionine. The segment at 15-40 (ASSPGSGSSSGSNSGGGAGSGSVHPA) is disordered. A compositionally biased stretch (low complexity) spans 16–26 (SSPGSGSSSGS). WD repeat units follow at residues 74-107 (TALA…CYCQ), 114-153 (VLQL…SLKF), 158-194 (ITYC…GYVI), 213-247 (HLSD…ELRV), 253-285 (IHSI…PSRP), 307-349 (PILK…KAIT), 357-391 (IVEF…VVDL), 413-490 (TCTA…YKLK), 518-629 (QMIY…ELVI), and 643-705 (TSLA…IADN). Phosphothreonine is present on Thr568. Residues Ser574, Ser589, and Ser593 each carry the phosphoserine modification. Thr596 is modified (phosphothreonine). Ser599 bears the Phosphoserine mark. Arg709 carries the omega-N-methylarginine modification. Over residues 748–769 (TSDHVNGHCTSPTSQSCSSGKR) the composition is skewed to polar residues. Residues 748-771 (TSDHVNGHCTSPTSQSCSSGKRLS) form a disordered region. 11 positions are modified to phosphoserine: Ser763, Ser765, Ser766, Ser771, Ser772, Ser793, Ser800, Ser812, Ser820, Ser822, and Ser823. 4 WD repeats span residues 832 to 889 (ITAL…SGTF), 898 to 969 (TFSC…QTCL), 974 to 1018 (ITET…LDVN), and 1032 to 1055 (CFTN…TYSQ). A Phosphothreonine modification is found at Thr1093. Residues 1121-1181 (SIEGMKGAAG…HELMLKYKDK (61 aa)) enclose the v-SNARE coiled-coil homology domain.

Belongs to the WD repeat L(2)GL family. As to quaternary structure, interacts with STX1A and STX4. In terms of processing, phosphorylated, leading to STXBP5L increased turnover and subsequent de-repression of insulin secretion. Phosphorylated on serine residues in response to glucose or phorbol esters. Ubiquitinated by the E3 ligase SYVN1, leading to STXBP5L proteasomal degradation. As to expression, detected in kidney, hippocampus and lung carcinoma.

It is found in the cytoplasm. The protein localises to the cell membrane. It localises to the membrane. Functionally, plays a role in vesicle trafficking and exocytosis inhibition. In pancreatic beta-cells, inhibits insulin secretion probably by interacting with and regulating STX1A and STX4, key t-SNARE proteins involved in the fusion of insulin granules to the plasma membrane. Also plays a role in neurotransmitter release by inhibiting basal acetylcholine release from axon terminals and by preventing synaptic fatigue upon repetitive stimulation. Promotes as well axonal outgrowth. In Homo sapiens (Human), this protein is Syntaxin-binding protein 5-like (STXBP5L).